A 210-amino-acid chain; its full sequence is Transcriptional regulator MxiE (210 aa).

In terms of domain architecture, HTH araC/xylS-type spans 99–199 (YHLVLYLLRT…GFSARELSNI (101 aa)). DNA-binding regions (H-T-H motif) lie at residues 118–139 (KSLT…RKAL) and 166–189 (ITSA…KTRL).

Its function is as follows. Necessary for the secretion of ipa invasins. Probable transcriptional regulatory protein. The sequence is that of Transcriptional regulator MxiE (mxiE) from Shigella flexneri.